The chain runs to 972 residues: Aminopeptidase Ey (972 aa).

The Cytoplasmic segment spans residues 2 to 10 (AAGFFISKS). Residues 11 to 31 (VGIVGIVLALGAVATIIALSV) traverse the membrane as a helical; Signal-anchor for type II membrane protein segment. Over 32 to 972 (VYAQEKNKSS…AWFRAETASS (941 aa)) the chain is Extracellular. Positions 33-72 (YAQEKNKSSGGSGGSDTTSTTTASTTTTSTTTASTTAAPN) are cytosolic Ser/Thr-rich junction. The segment at 37 to 77 (KNKSSGGSGGSDTTSTTTASTTTTSTTTASTTAAPNNPWNR) is disordered. N-linked (GlcNAc...) asparagine glycosylation is present at Asn-38. A compositionally biased stretch (low complexity) spans 47-70 (SDTTSTTTASTTTTSTTTASTTAA). The interval 73–967 (NPWNRWRLPT…KEVVHAWFRA (895 aa)) is metalloprotease. Asn-110, Asn-132, Asn-147, Asn-206, Asn-269, and Asn-296 each carry an N-linked (GlcNAc...) asparagine glycan. 355–359 (GAMEN) contacts substrate. His-391 is a binding site for Zn(2+). The active-site Proton acceptor is the Glu-392. Positions 395 and 414 each coordinate Zn(2+). Asn-513, Asn-574, Asn-584, Asn-628, Asn-684, and Asn-742 each carry an N-linked (GlcNAc...) asparagine glycan. The cysteines at positions 764 and 771 are disulfide-linked. Residue Asn-785 is glycosylated (N-linked (GlcNAc...) asparagine). A disulfide bridge connects residues Cys-801 and Cys-837.

The protein belongs to the peptidase M1 family. As to quaternary structure, homodimer. Zn(2+) serves as cofactor. In terms of tissue distribution, detected in the plasma and granule fractions of egg yolk (at protein level).

It localises to the cell membrane. The catalysed reaction is Differs from other aminopeptidases in broad specificity for amino acids in the P1 position and the ability to hydrolyze peptides of four or five residues that contain Pro in the P1' position.. Its function is as follows. Broad specificity aminopeptidase. Degrades a variety of peptides possessing various N-terminal amino acids including hydrophobic, basic and acidic amino acids. Preferentially hydrolyzes small peptides consisting of 4 or 5 amino acids. Hydrolyzes the N-terminal Xaa-Pro bonds in the chicken brain peptide Leu-Pro-Leu-Arg-PheNH2, the substance P fragment Arg-Pro-Lys-Pro and the bradykinin fragment Arg-Pro-Pro-Gly-Phe. Hydrolyzes the N-formylated peptides fMet-Leu-Phe, fMet-Ala-Gly-Ser-Glu and fMet-Nle-Leu-Phe-Nle-Tyr-Lys, but does not hydrolyze peptides with acetylation or pyroglutamic acid at N-terminus. Does not hydrolyze large peptides such as complete substance P, bradykinin or schistoFLRFamide. The sequence is that of Aminopeptidase Ey (ANPEP) from Gallus gallus (Chicken).